The primary structure comprises 438 residues: MGLPGSPWQRVLLLLGLLLPPATPFWLLNVLFPPHTTPKAELSNHTRPVILVPGCLGNRLEAKLDKPDVVNWMCYRKTEDFFTIWLDFNLFLPLGVDCWIDNTRIVYNHSSGRVSNAPGVQIRVPGFGKTESVEYVDDNKLAGYLHTLVQNLVNNGYVRDETVRAAPYDWRLAPHQQDEYYKKLAGLVEEMYAAYGKPVFLIGHSLGCLHVLHFLLRQPQSWKDHFIDGFISLGAPWGGSIKAMRILASGDNQGIPILSNIKLKEEQRITTTSPWMLPAPHVWPEDHVFISTPNFNYTVQDFERFFTDLHFEEGWHMFLQSRDLLERLPAPGVEVYCLYGVGRPTPHTYIYDHNFPYKDPVAALYEDGDDTVATRSTELCGQWQGRQSQPVHLLPMNETDHLNMVFSNKTLEHINAILLGAYRTPKSPAASPSPPPPE.

Residues Met1–Pro24 form the signal peptide. N-linked (GlcNAc...) asparagine glycosylation occurs at Asn44. A disulfide bridge links Cys74 with Cys98. Residue Asn108 is glycosylated (N-linked (GlcNAc...) asparagine). Ser205 (nucleophile) is an active-site residue. N-linked (GlcNAc...) asparagine glycosylation occurs at Asn296. Cysteines 337 and 380 form a disulfide. Catalysis depends on Asp369, which acts as the Charge relay system. The N-linked (GlcNAc...) asparagine glycan is linked to Asn397. His401 acts as the Charge relay system in catalysis. N-linked (GlcNAc...) asparagine glycosylation is present at Asn408.

This sequence belongs to the AB hydrolase superfamily. Lipase family. As to expression, detected in blood plasma. Produced and secreted by astrocytes (at protein level). Abundantly expressed in liver, brain and testis with highest levels in liver. In the brain, found in cerebellum, cerebral cortex, hippocampus and brain stem. Located to neurons and neuroglia.

Its subcellular location is the secreted. It catalyses the reaction a sterol + a 1,2-diacyl-sn-glycero-3-phosphocholine = a sterol ester + a 1-acyl-sn-glycero-3-phosphocholine. The catalysed reaction is a 1-O-alkyl-2-acetyl-sn-glycero-3-phosphocholine + H2O = a 1-O-alkyl-sn-glycero-3-phosphocholine + acetate + H(+). The enzyme catalyses a 1-hexadecanoyl-2-acyl-sn-glycero-3-phosphocholine + (24S)-hydroxycholesterol = (24S)-24-hydroxycholesterol ester + 1-hexadecanoyl-sn-glycero-3-phosphocholine. It carries out the reaction (24S)-hydroxycholesterol + 1-hexadecanoyl-2-(9Z,12Z-octadecadienoyl)-sn-glycero-3-phosphocholine = (24S)-hydroxycholesterol 3-linoleoate + 1-hexadecanoyl-sn-glycero-3-phosphocholine. It catalyses the reaction 1-hexadecanoyl-2-(5Z,8Z,11Z,14Z-eicosatetraenoyl)-sn-glycero-3-phosphocholine + cholesterol = cholesteryl (5Z,8Z,11Z,14Z)-eicosatetraenoate + 1-hexadecanoyl-sn-glycero-3-phosphocholine. The catalysed reaction is 1-hexadecanoyl-2-(9Z-octadecenoyl)-sn-glycero-3-phosphocholine + cholesterol = cholesteryl (9Z-octadecenoate) + 1-hexadecanoyl-sn-glycero-3-phosphocholine. The enzyme catalyses 1-hexadecanoyl-2-(8Z,11Z,14Z-eicosatrienoyl)-sn-glycero-3-phosphocholine + cholesterol = cholesteryl (8Z,11Z,14Z)-eicosatrienoate + 1-hexadecanoyl-sn-glycero-3-phosphocholine. It carries out the reaction 1-hexadecanoyl-2-(5Z,8Z,11Z-eicosatrienoyl)-sn-glycero-3-phosphocholine + cholesterol = cholesteryl (5Z,8Z,11Z)-eicosatrienoate + 1-hexadecanoyl-sn-glycero-3-phosphocholine. It catalyses the reaction 1-hexadecanoyl-2-(5Z,8Z,11Z,14Z,17Z-eicosapentaenoyl)-sn-glycero-3-phosphocholine + cholesterol = (5Z,8Z,11Z,14Z,17Z-eicosapentaenoyl)-cholesterol + 1-hexadecanoyl-sn-glycero-3-phosphocholine. The catalysed reaction is 1-hexadecanoyl-2-(9Z,12Z-octadecadienoyl)-sn-glycero-3-phosphocholine + cholesterol = cholesteryl (9Z,12Z)-octadecadienoate + 1-hexadecanoyl-sn-glycero-3-phosphocholine. The enzyme catalyses 1-hexadecanoyl-2-(6Z,9Z,12Z-octadecatrienoyl)-sn-glycero-3-phosphocholine + cholesterol = (6Z,9Z,12Z-octadecatrienoyl)-cholesterol + 1-hexadecanoyl-sn-glycero-3-phosphocholine. It carries out the reaction 1-hexadecanoyl-2-(11Z,14Z,17Z-eicosatrienoyl)-sn-glycero-3-phosphocholine + cholesterol = (11Z,14Z,17Z-eicosatrienoyl)-cholesterol + 1-hexadecanoyl-sn-glycero-3-phosphocholine. It catalyses the reaction 1-hexadecanoyl-2-(9Z,12Z,15Z-octadecatrienoyl)-sn-glycero-3-phosphocholine + cholesterol = (9Z,12Z,15Z-octadecatrienoyl)-cholesterol + 1-hexadecanoyl-sn-glycero-3-phosphocholine. The catalysed reaction is 1-hexadecanoyl-2-(9Z,12Z-octadecadienoyl)-sn-glycero-3-phosphocholine + H2O = (9Z,12Z)-octadecadienoate + 1-hexadecanoyl-sn-glycero-3-phosphocholine + H(+). The enzyme catalyses 1-hexadecanoyl-2-(5Z,8Z,11Z,14Z-eicosatetraenoyl)-sn-glycero-3-phosphocholine + H2O = 1-hexadecanoyl-sn-glycero-3-phosphocholine + (5Z,8Z,11Z,14Z)-eicosatetraenoate + H(+). It carries out the reaction a 1-O-alkyl-2-acetyl-sn-glycero-3-phosphocholine + 1-hexadecanoyl-sn-glycero-3-phosphocholine = 1-hexadecanoyl-2-acetyl-sn-glycero-3-phosphocholine + a 1-O-alkyl-sn-glycero-3-phosphocholine. Its activity is regulated as follows. APOA1 is the most potent activator in plasma. Also activated by APOE, APOC1 and APOA4. Functionally, central enzyme in the extracellular metabolism of plasma lipoproteins. Synthesized mainly in the liver and secreted into plasma where it converts cholesterol and phosphatidylcholines (lecithins) to cholesteryl esters and lysophosphatidylcholines on the surface of high and low density lipoproteins (HDLs and LDLs). The cholesterol ester is then transported back to the liver. Also produced in the brain by primary astrocytes, and esterifies free cholesterol on nascent APOE-containing lipoproteins secreted from glia and influences cerebral spinal fluid (CSF) APOE- and APOA1 levels. Together with APOE and the cholesterol transporter ABCA1, plays a key role in the maturation of glial-derived, nascent lipoproteins. Required for remodeling high-density lipoprotein particles into their spherical forms. Has a preference for plasma 16:0-18:2 or 18:O-18:2 phosphatidylcholines. Catalyzes the hydrolysis of 1-O-alkyl-2-acetyl-sn-glycero-3-phosphocholine (platelet-activating factor or PAF) to 1-O-alkyl-sn-glycero-3-phosphocholine (lyso-PAF). Also catalyzes the transfer of the acetate group from PAF to 1-hexadecanoyl-sn-glycero-3-phosphocholine forming lyso-PAF. Catalyzes the esterification of (24S)-hydroxycholesterol (24(S)OH-C), also known as cerebrosterol to produce 24(S)OH-C monoesters. This is Phosphatidylcholine-sterol acyltransferase (Lcat) from Mus musculus (Mouse).